We begin with the raw amino-acid sequence, 529 residues long: Probable threonine/serine exporter (529 aa).

10 helical membrane passes run 88–108, 168–188, 212–232, 234–254, 265–285, 312–332, 344–364, 365–385, 389–409, and 428–448; these read ITVT…PVTI, FALG…LAAV, VFGA…AGQD, TALV…VGSM, ALAR…GILI, MPLP…CLTI, AGLS…AGFG, RVVA…LISI, APAL…LAVF, and LLEA…GEFL. The segment at 482–501 is disordered; that stretch reads QPAKSQQPTGTGGQRWRSVA.

It belongs to the ThrE exporter (TC 2.A.79) family.

It is found in the cell membrane. It carries out the reaction L-threonine(in) + H(+)(out) = L-threonine(out) + H(+)(in). Its function is as follows. Catalyzes the export of L-threonine and L-serine from the cell to the extracellular environment. Export is dependent on the proton motive force. Required for in vitro growth and survival of bacteria inside macrophages. Increased expression is associated with low-level amikacin (AMK) resistance. This Mycobacterium tuberculosis (strain ATCC 25618 / H37Rv) protein is Probable threonine/serine exporter.